Consider the following 97-residue polypeptide: Aspartyl/glutamyl-tRNA(Asn/Gln) amidotransferase subunit C (97 aa).

The protein belongs to the GatC family. Heterotrimer of A, B and C subunits.

The enzyme catalyses L-glutamyl-tRNA(Gln) + L-glutamine + ATP + H2O = L-glutaminyl-tRNA(Gln) + L-glutamate + ADP + phosphate + H(+). The catalysed reaction is L-aspartyl-tRNA(Asn) + L-glutamine + ATP + H2O = L-asparaginyl-tRNA(Asn) + L-glutamate + ADP + phosphate + 2 H(+). Its function is as follows. Allows the formation of correctly charged Asn-tRNA(Asn) or Gln-tRNA(Gln) through the transamidation of misacylated Asp-tRNA(Asn) or Glu-tRNA(Gln) in organisms which lack either or both of asparaginyl-tRNA or glutaminyl-tRNA synthetases. The reaction takes place in the presence of glutamine and ATP through an activated phospho-Asp-tRNA(Asn) or phospho-Glu-tRNA(Gln). This Synechococcus sp. (strain CC9902) protein is Aspartyl/glutamyl-tRNA(Asn/Gln) amidotransferase subunit C.